Here is a 298-residue protein sequence, read N- to C-terminus: tRNA pseudouridine synthase B (298 aa).

The active-site Nucleophile is the D42.

The protein belongs to the pseudouridine synthase TruB family. Type 1 subfamily.

The catalysed reaction is uridine(55) in tRNA = pseudouridine(55) in tRNA. In terms of biological role, responsible for synthesis of pseudouridine from uracil-55 in the psi GC loop of transfer RNAs. This chain is tRNA pseudouridine synthase B, found in Mycobacterium tuberculosis (strain CDC 1551 / Oshkosh).